Here is a 234-residue protein sequence, read N- to C-terminus: Phosphoribosylaminoimidazole-succinocarboxamide synthase (234 aa).

It belongs to the SAICAR synthetase family.

The catalysed reaction is 5-amino-1-(5-phospho-D-ribosyl)imidazole-4-carboxylate + L-aspartate + ATP = (2S)-2-[5-amino-1-(5-phospho-beta-D-ribosyl)imidazole-4-carboxamido]succinate + ADP + phosphate + 2 H(+). It functions in the pathway purine metabolism; IMP biosynthesis via de novo pathway; 5-amino-1-(5-phospho-D-ribosyl)imidazole-4-carboxamide from 5-amino-1-(5-phospho-D-ribosyl)imidazole-4-carboxylate: step 1/2. The sequence is that of Phosphoribosylaminoimidazole-succinocarboxamide synthase from Streptococcus pyogenes serotype M3 (strain ATCC BAA-595 / MGAS315).